The primary structure comprises 232 residues: Large ribosomal subunit protein uL1 (232 aa).

It belongs to the universal ribosomal protein uL1 family. As to quaternary structure, part of the 50S ribosomal subunit.

Functionally, binds directly to 23S rRNA. The L1 stalk is quite mobile in the ribosome, and is involved in E site tRNA release. In terms of biological role, protein L1 is also a translational repressor protein, it controls the translation of the L11 operon by binding to its mRNA. The chain is Large ribosomal subunit protein uL1 from Bacteroides thetaiotaomicron (strain ATCC 29148 / DSM 2079 / JCM 5827 / CCUG 10774 / NCTC 10582 / VPI-5482 / E50).